The following is a 482-amino-acid chain: Proline--tRNA ligase (482 aa).

L-proline-binding residues include T117, E119, and R148. ATP-binding residues include R148, E150, Q232, and T235. H237 is a binding site for L-proline. Residue S269 coordinates ATP. The tract at residues 346-376 (EMRGVPLRVEIGPRDLEKGAAVISRRDTGEK) is interaction with tRNA. 4 residues coordinate Zn(2+): C436, C441, C464, and C467.

This sequence belongs to the class-II aminoacyl-tRNA synthetase family. ProS type 3 subfamily. In terms of assembly, homodimer. The dimer is functionally asymmetric: only one of the two active sites at a time is able to form prolyl-adenylate, and only one tRNA molecule binds per dimer. Interacts with LeuRS, which enhances tRNA(Pro) aminoacylation.

It is found in the cytoplasm. It catalyses the reaction tRNA(Pro) + L-proline + ATP = L-prolyl-tRNA(Pro) + AMP + diphosphate. Functionally, catalyzes the attachment of proline to tRNA(Pro) in a two-step reaction: proline is first activated by ATP to form Pro-AMP and then transferred to the acceptor end of tRNA(Pro). Can inadvertently accommodate and process cysteine. The protein is Proline--tRNA ligase (proS) of Methanothermobacter thermautotrophicus (strain ATCC 29096 / DSM 1053 / JCM 10044 / NBRC 100330 / Delta H) (Methanobacterium thermoautotrophicum).